Here is a 376-residue protein sequence, read N- to C-terminus: Non-structural protein NS2 (376 aa).

Positions 163–188 are enriched in basic and acidic residues; sequence EEREKGAVEQPHKPAFKTERGMNRPD. The interval 163 to 201 is disordered; it reads EEREKGAVEQPHKPAFKTERGMNRPDSDEDQNPAGGVVN.

This sequence belongs to the orbivirus non-structural protein NS2 family.

Its function is as follows. Single-stranded RNA-binding protein. In Antilocapra americana (Pronghorn), this protein is Non-structural protein NS2 (Segment-8).